We begin with the raw amino-acid sequence, 134 residues long: Large ribosomal subunit protein uL16c (134 aa).

It belongs to the universal ribosomal protein uL16 family. As to quaternary structure, part of the 50S ribosomal subunit.

The protein localises to the plastid. It is found in the chloroplast. The polypeptide is Large ribosomal subunit protein uL16c (Gnetum parvifolium (Small-leaved jointfir)).